The following is a 748-amino-acid chain: Putative pre-mRNA-splicing factor ATP-dependent RNA helicase DHX32 (748 aa).

Positions 74–240 constitute a Helicase ATP-binding domain; that stretch reads LEHLAHNQIV…YGNAPLVEAE (167 aa). Residue 87 to 94 participates in ATP binding; the sequence is AGPKSGKS. In terms of domain architecture, Helicase C-terminal spans 263–439; sequence RLLFEIHHTK…SMVLFLKRMD (177 aa). Positions 706-748 are disordered; the sequence is SETKDLLQQDQTPDTPPTEEPREEEPLHEANDEGTAEQRCIIQ.

Belongs to the DEAD box helicase family. DEAH subfamily.

The protein resides in the nucleus. The protein localises to the mitochondrion. The catalysed reaction is ATP + H2O = ADP + phosphate + H(+). This chain is Putative pre-mRNA-splicing factor ATP-dependent RNA helicase DHX32 (dhx32), found in Xenopus laevis (African clawed frog).